Here is a 1435-residue protein sequence, read N- to C-terminus: Neuropathy target esterase sws (1435 aa).

The Lumenal segment spans residues 1-35 (MDVLELLRVSGSNMYYSTFLADAWCYYISNQITMT). Residues 36 to 56 (MYLYCALGVLSMLFIGWFVYF) traverse the membrane as a helical segment. Over 57 to 1435 (KRLARLRLRH…NTNNETKNYL (1379 aa)) the chain is Cytoplasmic. A nucleoside 3',5'-cyclic phosphate is bound at residue 176 to 303 (IFGHFEKPIF…IRVIQVIMIR (128 aa)). Residues 361–372 (AASGTAGSTHTA) are compositionally biased toward low complexity. Disordered stretches follow at residues 361–405 (AASG…ELSG) and 422–452 (NSYPPLYHQRESDGNLSTRRGSITQQEQPEV). Residues 435-449 (GNLSTRRGSITQQEQ) show a composition bias toward polar residues. Phosphoserine is present on Ser443. Residues 474-601 (ELGL…VVRR) and 590-717 (IVLD…LSHR) contribute to the a nucleoside 3',5'-cyclic phosphate site. Residues 944–1110 (LVLGGGGARG…VNNLPGHLWR (167 aa)) enclose the PNPLA domain. Residues 948-953 (GGGARG) carry the GXGXXG motif. Positions 975 to 979 (GVSIG) match the GXSXG motif. Ser977 acts as the Nucleophile in catalysis. Catalysis depends on Asp1097, which acts as the Proton acceptor. Positions 1097–1099 (DGG) match the DGA/G motif. The disordered stretch occupies residues 1308–1435 (MDKATQSTPP…NTNNETKNYL (128 aa)). Residues 1311 to 1322 (ATQSTPPLQSKA) show a composition bias toward polar residues. 2 stretches are compositionally biased toward basic and acidic residues: residues 1330 to 1361 (SKEEARHEWEIKREQKQELAREQELERERELS) and 1393 to 1424 (MDKKKTKDNDRDEVRGSAEDTGKEKEEDKENR). Residues 1425 to 1435 (SNTNNETKNYL) are compositionally biased toward polar residues.

It belongs to the NTE family. In terms of assembly, interacts with Pka-C3; interaction inhibits the catalytic function of Pka-C3 and the esterase activity of sws.

The protein resides in the endoplasmic reticulum membrane. It carries out the reaction a 1-acyl-sn-glycero-3-phosphocholine + H2O = sn-glycerol 3-phosphocholine + a fatty acid + H(+). In terms of biological role, phospholipase B that deacylates intracellular phosphatidylcholine (PtdCho), generating glycerophosphocholine (GroPtdCho). This deacylation occurs at both sn-2 and sn-1 positions of PtdCho. Its specific chemical modification by certain organophosphorus (OP) compounds leads to distal axonopathy. Plays a role in the signaling mechanism between neurons and glia that regulates glia wrapping during development of the adult brain. Essential for membrane lipid homeostasis and cell survival in both neurons and glia of the adult brain. This chain is Neuropathy target esterase sws, found in Drosophila persimilis (Fruit fly).